An 81-amino-acid polypeptide reads, in one-letter code: Large ribosomal subunit protein bL27 (81 aa).

The span at 1–11 (MATSKSGGSSK) shows a compositional bias: polar residues. The segment at 1–23 (MATSKSGGSSKNGRDSISKRLGV) is disordered.

The protein belongs to the bacterial ribosomal protein bL27 family.

The chain is Large ribosomal subunit protein bL27 from Borrelia garinii subsp. bavariensis (strain ATCC BAA-2496 / DSM 23469 / PBi) (Borreliella bavariensis).